A 189-amino-acid chain; its full sequence is GTP cyclohydrolase 1 (189 aa).

Positions 78, 81, and 150 each coordinate Zn(2+).

This sequence belongs to the GTP cyclohydrolase I family. Toroid-shaped homodecamer, composed of two pentamers of five dimers.

The enzyme catalyses GTP + H2O = 7,8-dihydroneopterin 3'-triphosphate + formate + H(+). It functions in the pathway cofactor biosynthesis; 7,8-dihydroneopterin triphosphate biosynthesis; 7,8-dihydroneopterin triphosphate from GTP: step 1/1. This Listeria monocytogenes serovar 1/2a (strain ATCC BAA-679 / EGD-e) protein is GTP cyclohydrolase 1.